A 327-amino-acid chain; its full sequence is Phenylalanine--tRNA ligase alpha subunit (327 aa).

Glutamate 252 is a binding site for Mg(2+).

This sequence belongs to the class-II aminoacyl-tRNA synthetase family. Phe-tRNA synthetase alpha subunit type 1 subfamily. As to quaternary structure, tetramer of two alpha and two beta subunits. Mg(2+) is required as a cofactor.

The protein resides in the cytoplasm. It catalyses the reaction tRNA(Phe) + L-phenylalanine + ATP = L-phenylalanyl-tRNA(Phe) + AMP + diphosphate + H(+). In Shigella dysenteriae serotype 1 (strain Sd197), this protein is Phenylalanine--tRNA ligase alpha subunit.